We begin with the raw amino-acid sequence, 200 residues long: Ciliary microtubule inner protein 2C (200 aa).

It belongs to the CIMIP2 family. As to quaternary structure, microtubule inner protein component of sperm flagellar doublet microtubules.

Its subcellular location is the cytoplasm. The protein resides in the cytoskeleton. The protein localises to the cilium axoneme. It localises to the flagellum axoneme. In terms of biological role, microtubule inner protein (MIP) part of the dynein-decorated doublet microtubules (DMTs) in cilia axoneme, which is required for motile cilia beating. Binds to the intra-tubulin interfaces. This chain is Ciliary microtubule inner protein 2C (Cimip2c), found in Mus musculus (Mouse).